Reading from the N-terminus, the 157-residue chain is Arginine repressor (157 aa).

This sequence belongs to the ArgR family.

It localises to the cytoplasm. Its pathway is amino-acid biosynthesis; L-arginine biosynthesis [regulation]. In terms of biological role, regulates arginine biosynthesis genes. In Bacteroides fragilis (strain ATCC 25285 / DSM 2151 / CCUG 4856 / JCM 11019 / LMG 10263 / NCTC 9343 / Onslow / VPI 2553 / EN-2), this protein is Arginine repressor.